Consider the following 130-residue polypeptide: Small ribosomal subunit protein uS9 (130 aa).

The protein belongs to the universal ribosomal protein uS9 family.

This chain is Small ribosomal subunit protein uS9, found in Polaromonas sp. (strain JS666 / ATCC BAA-500).